Consider the following 601-residue polypeptide: MAKEKIIGIDLGTTNSVVAILEDKTPRVLENPNGKRTTPSVVSFKNDDIIVGEVAKRQLETNINTIASIKRKMGTSETVKINDKEYKPEEISAMILSYLKDYAEKKIGSKIKKAVITVPAYFNNAQREATKTAGRIAGLSVERIINEPTAAALAFGLDKTDKEQKILVYDLGGGTFDVSVLELANGTFEVLSTSGDNFLGGDDWDNEIVKWLIGKIKLEHKYDVSKDKMAMARLKEEAEKAKINLSTTSTTSINLPFLAVTDSGPINVEVELKRSDFEKMTQHLVERTRKPVRDALKEAKLKSEDLHEVLLVGGSTRIPAVQEMLQHELNKKPNHSINPDEVVAIGAAIQGAVLSGDINDVLLLDVTPLTLGIETQGGIATPLIQRNTTIPTTKSQIFSTAADNQSEVTINVVQGERQMAADNKSLGQFNLGGIEKAPRGTPQIEVSFSIDVNGIIKVSATDKKTNKIQTITIENSTSLTEEEIKKMIDDAEKNKEADAKKKEKIDVTVRAETLINQLEKTIKDQGDKIDPKEKEQTEKEITNIKDLILQDKIDELKIKLDQIEEVAKAFAQKAASKETSKNEQNEDGSIDAEIKEEDPKA.

Threonine 175 carries the post-translational modification Phosphothreonine; by autocatalysis. A disordered region spans residues 570–601; sequence FAQKAASKETSKNEQNEDGSIDAEIKEEDPKA. The segment covering 575 to 584 has biased composition (basic and acidic residues); sequence ASKETSKNEQ. Over residues 585 to 601 the composition is skewed to acidic residues; the sequence is NEDGSIDAEIKEEDPKA.

The protein belongs to the heat shock protein 70 family.

In terms of biological role, acts as a chaperone. This Mycoplasma mobile (strain ATCC 43663 / 163K / NCTC 11711) (Mesomycoplasma mobile) protein is Chaperone protein DnaK.